Consider the following 207-residue polypeptide: MNSLSTSAFSLGLLLVMATAFPTPGPLAGDSKDDATSNSLPLTSANKVEELIKYILGKISALRKEMCDKFNKCEDSKEALAENNLHLPKLEGKDGCFQSGFNQETCLTRITTGLVEFQLHLNILQNNYEGDKENVKSVHMSTKILVQMLKSKVKNQDEVTTPDPTTDASLQAILQSQDECVKHTTIHLILRSLEDFLQFSLRAVRIM.

Positions 1–20 (MNSLSTSAFSLGLLLVMATA) are cleaved as a signal peptide. Residues Cys67 and Cys73 are joined by a disulfide bond. Ser76 is subject to Phosphoserine. Cys96 and Cys106 are joined by a disulfide.

It belongs to the IL-6 superfamily. In terms of assembly, component of a hexamer of two molecules each of IL6, IL6R and IL6ST; first binds to IL6R to associate with the signaling subunit IL6ST. Interacts with IL6R (via the N-terminal ectodomain); this interaction may be affected by IL6R-binding with SORL1, hence decreasing IL6 cis signaling. Interacts with SORL1 (via the N-terminal ectodomain); this interaction leads to IL6 internalization and lysosomal degradation. May form a trimeric complex with the soluble SORL1 ectodomain and soluble IL6R receptor; this interaction might stabilize circulating IL6, hence promoting IL6 trans signaling.

It is found in the secreted. Functionally, cytokine with a wide variety of biological functions in immunity, tissue regeneration, and metabolism. Binds to IL6R, then the complex associates to the signaling subunit IL6ST/gp130 to trigger the intracellular IL6-signaling pathway. The interaction with the membrane-bound IL6R and IL6ST stimulates 'classic signaling', whereas the binding of IL6 and soluble IL6R to IL6ST stimulates 'trans-signaling'. Alternatively, 'cluster signaling' occurs when membrane-bound IL6:IL6R complexes on transmitter cells activate IL6ST receptors on neighboring receiver cells. IL6 is a potent inducer of the acute phase response. Rapid production of IL6 contributes to host defense during infection and tissue injury, but excessive IL6 synthesis is involved in disease pathology. In the innate immune response, is synthesized by myeloid cells, such as macrophages and dendritic cells, upon recognition of pathogens through toll-like receptors (TLRs) at the site of infection or tissue injury. In the adaptive immune response, is required for the differentiation of B cells into immunoglobulin-secreting cells. Plays a major role in the differentiation of CD4(+) T cell subsets. Essential factor for the development of T follicular helper (Tfh) cells that are required for the induction of germinal-center formation. Required to drive naive CD4(+) T cells to the Th17 lineage. Also required for proliferation of myeloma cells and the survival of plasmablast cells. Its function is as follows. Acts as an essential factor in bone homeostasis and on vessels directly or indirectly by induction of VEGF, resulting in increased angiogenesis activity and vascular permeability. Induces, through 'trans-signaling' and synergistically with IL1B and TNF, the production of VEGF. Involved in metabolic controls, is discharged into the bloodstream after muscle contraction increasing lipolysis and improving insulin resistance. 'Trans-signaling' in central nervous system also regulates energy and glucose homeostasis. Mediates, through GLP-1, crosstalk between insulin-sensitive tissues, intestinal L cells and pancreatic islets to adapt to changes in insulin demand. Also acts as a myokine. Plays a protective role during liver injury, being required for maintenance of tissue regeneration. Also has a pivotal role in iron metabolism by regulating HAMP/hepcidin expression upon inflammation or bacterial infection. Through activation of IL6ST-YAP-NOTCH pathway, induces inflammation-induced epithelial regeneration. In Canis lupus familiaris (Dog), this protein is Interleukin-6 (IL6).